A 321-amino-acid polypeptide reads, in one-letter code: tRNA uridine(34) hydroxylase (321 aa).

Residues 123–217 (SDPDVTVIDT…YLEEVPEGNS (95 aa)) form the Rhodanese domain. The active-site Cysteine persulfide intermediate is the Cys-177. Residues 294 to 308 (RKGELHIGDRADIAK) show a composition bias toward basic and acidic residues. The disordered stretch occupies residues 294 to 321 (RKGELHIGDRADIAKSRTTQGAPSADGE).

The protein belongs to the TrhO family.

It carries out the reaction uridine(34) in tRNA + AH2 + O2 = 5-hydroxyuridine(34) in tRNA + A + H2O. In terms of biological role, catalyzes oxygen-dependent 5-hydroxyuridine (ho5U) modification at position 34 in tRNAs. This chain is tRNA uridine(34) hydroxylase, found in Teredinibacter turnerae (strain ATCC 39867 / T7901).